Here is a 320-residue protein sequence, read N- to C-terminus: ATP-dependent 6-phosphofructokinase (320 aa).

An ATP-binding site is contributed by glycine 11. 21–25 (RAVVR) is a binding site for ADP. ATP is bound by residues 72–73 (RC) and 102–105 (GDGS). Aspartate 103 provides a ligand contact to Mg(2+). 125–127 (TID) contacts substrate. The active-site Proton acceptor is the aspartate 127. An ADP-binding site is contributed by arginine 154. Substrate-binding positions include arginine 162 and 169–171 (MGR). Residues 185-187 (GAE) and 214-216 (KTH) each bind ADP. Substrate-binding positions include glutamate 223, arginine 244, and 250–253 (HIQR).

This sequence belongs to the phosphofructokinase type A (PFKA) family. ATP-dependent PFK group I subfamily. Prokaryotic clade 'B1' sub-subfamily. In terms of assembly, homotetramer. It depends on Mg(2+) as a cofactor.

The protein localises to the cytoplasm. It carries out the reaction beta-D-fructose 6-phosphate + ATP = beta-D-fructose 1,6-bisphosphate + ADP + H(+). It functions in the pathway carbohydrate degradation; glycolysis; D-glyceraldehyde 3-phosphate and glycerone phosphate from D-glucose: step 3/4. Allosterically activated by ADP and other diphosphonucleosides, and allosterically inhibited by phosphoenolpyruvate. Catalyzes the phosphorylation of D-fructose 6-phosphate to fructose 1,6-bisphosphate by ATP, the first committing step of glycolysis. The sequence is that of ATP-dependent 6-phosphofructokinase from Clostridium botulinum (strain Eklund 17B / Type B).